A 271-amino-acid chain; its full sequence is MSDEEVEHVEEEYEEEEEAQEEAPPPPAEVHEVHEEVHEVHEPEEVQEEEKPRPKLTAPKIPEGEKVDFDDIQKKRQNKDLMELQALIDSHFEARKKEEEELVALKERIEKRRAERAEQQRIRAEKERERQNRLAEEKARREEEEAKRRAEDDLKKKKALSSMGANYSSYLAKADQKRGKKQTAREMKKKVLAERRKPLNIDHLSEDKLRDKAKELWDALYQLEIDKFEYGEKLKRQKYDIINLRSRIDQAQKHSKKAGTTPKGKVGGRWK.

Over residues 1–21 the composition is skewed to acidic residues; that stretch reads MSDEEVEHVEEEYEEEEEAQE. The tract at residues 1 to 74 is disordered; sequence MSDEEVEHVE…EKVDFDDIQK (74 aa). Residue Ser2 is modified to N-acetylserine. The residue at position 2 (Ser2) is a Phosphoserine. Composition is skewed to basic and acidic residues over residues 29–53 and 62–74; these read EVHEVHEEVHEVHEPEEVQEEEKPR and PEGEKVDFDDIQK. Ser90 carries the phosphoserine modification. The span at 113 to 155 shows a compositional bias: basic and acidic residues; that stretch reads RAERAEQQRIRAEKERERQNRLAEEKARREEEEAKRRAEDDLK. Positions 113-192 are disordered; that stretch reads RAERAEQQRI…TAREMKKKVL (80 aa). Residues Ser161, Ser168, and Ser169 each carry the phosphoserine modification. The span at 183 to 192 shows a compositional bias: basic and acidic residues; that stretch reads TAREMKKKVL. Ser205 is subject to Phosphoserine. The residue at position 221 (Tyr221) is a Phosphotyrosine. Residues 249-271 form a disordered region; it reads DQAQKHSKKAGTTPKGKVGGRWK.

It belongs to the troponin T family.

In terms of biological role, troponin T is the tropomyosin-binding subunit of troponin, the thin filament regulatory complex which confers calcium-sensitivity to striated muscle actomyosin ATPase activity. The polypeptide is Troponin T, fast skeletal muscle (TNNT3) (Sus scrofa (Pig)).